The primary structure comprises 364 residues: tRNA 2-selenouridine synthase (364 aa).

Positions 14–137 (LLADTPLIDV…LRQTAIQATW (124 aa)) constitute a Rhodanese domain. The S-selanylcysteine intermediate role is filled by Cys-97.

This sequence belongs to the SelU family. As to quaternary structure, monomer.

It catalyses the reaction 5-methylaminomethyl-2-thiouridine(34) in tRNA + selenophosphate + (2E)-geranyl diphosphate + H2O + H(+) = 5-methylaminomethyl-2-selenouridine(34) in tRNA + (2E)-thiogeraniol + phosphate + diphosphate. The enzyme catalyses 5-methylaminomethyl-2-thiouridine(34) in tRNA + (2E)-geranyl diphosphate = 5-methylaminomethyl-S-(2E)-geranyl-thiouridine(34) in tRNA + diphosphate. The catalysed reaction is 5-methylaminomethyl-S-(2E)-geranyl-thiouridine(34) in tRNA + selenophosphate + H(+) = 5-methylaminomethyl-2-(Se-phospho)selenouridine(34) in tRNA + (2E)-thiogeraniol. It carries out the reaction 5-methylaminomethyl-2-(Se-phospho)selenouridine(34) in tRNA + H2O = 5-methylaminomethyl-2-selenouridine(34) in tRNA + phosphate. Functionally, involved in the post-transcriptional modification of the uridine at the wobble position (U34) of tRNA(Lys), tRNA(Glu) and tRNA(Gln). Catalyzes the conversion of 2-thiouridine (S2U-RNA) to 2-selenouridine (Se2U-RNA). Acts in a two-step process involving geranylation of 2-thiouridine (S2U) to S-geranyl-2-thiouridine (geS2U) and subsequent selenation of the latter derivative to 2-selenouridine (Se2U) in the tRNA chain. The protein is tRNA 2-selenouridine synthase of Salmonella enteritidis PT4 (strain P125109).